Consider the following 870-residue polypeptide: Rho GTPase-activating protein 7 (870 aa).

The region spanning 18-125 (TVFKSGPLFI…WKTALEQALA (108 aa)) is the PH domain. Positions 167 to 367 (LALEDIDGSP…VLLEDYGSIF (201 aa)) constitute a Rho-GAP domain. 2 disordered regions span residues 378-432 (STES…SGCT) and 446-465 (DSDIESPRDTNGPRCNSNIR). Over residues 407 to 417 (NEVEPVTDDDN) the composition is skewed to acidic residues. Positions 569–693 (GEDELAIQRL…HQLNQQRQTH (125 aa)) form a coiled coil. Residues 736-793 (HEENVLGAEWRNSKGAGSFGVGNSRQPSRKQIPESTNTTDSKISEESGKISVDKLSSI) are disordered. Residues 777–787 (KISEESGKISV) are compositionally biased toward basic and acidic residues.

In terms of biological role, acts as a GTPase activator for the Rac-type GTPase by converting it to an inactive GDP-bound state. This is Rho GTPase-activating protein 7 (ROPGAP7) from Arabidopsis thaliana (Mouse-ear cress).